A 293-amino-acid polypeptide reads, in one-letter code: MNTDVAPVKSKTERKPKPKWLRVKLPTGKKYTELRNLVDKYDLHTICTSGSCPNMGECWSEGTATFMILGNVCTRSCGFCGVKTGRPETVDWDEPEKVARSIKLMQIKHAVVTSVDRDDLKDMGSIVWAETVKAIRRMNPETTLETLIPDFQGNERNIDRIIEVAPEVVSHNMETVKRLTREVRIQAKYDRSLAVLKYLKDNGIRRTKSGIMLGLGEQEEEVIQTLKDLREAGVDVVTIGQYLQPSKKHLPVKQFITPDQFQKYEKIGLELGFRHVESSALVRSSYKAQKHLN.

[4Fe-4S] cluster is bound by residues Cys47, Cys52, Cys58, Cys73, Cys77, Cys80, and Ser285. One can recognise a Radical SAM core domain in the interval 59 to 274; that stretch reads WSEGTATFMI…EKIGLELGFR (216 aa).

This sequence belongs to the radical SAM superfamily. Lipoyl synthase family. Requires [4Fe-4S] cluster as cofactor.

The protein localises to the cytoplasm. The enzyme catalyses [[Fe-S] cluster scaffold protein carrying a second [4Fe-4S](2+) cluster] + N(6)-octanoyl-L-lysyl-[protein] + 2 oxidized [2Fe-2S]-[ferredoxin] + 2 S-adenosyl-L-methionine + 4 H(+) = [[Fe-S] cluster scaffold protein] + N(6)-[(R)-dihydrolipoyl]-L-lysyl-[protein] + 4 Fe(3+) + 2 hydrogen sulfide + 2 5'-deoxyadenosine + 2 L-methionine + 2 reduced [2Fe-2S]-[ferredoxin]. It participates in protein modification; protein lipoylation via endogenous pathway; protein N(6)-(lipoyl)lysine from octanoyl-[acyl-carrier-protein]: step 2/2. Functionally, catalyzes the radical-mediated insertion of two sulfur atoms into the C-6 and C-8 positions of the octanoyl moiety bound to the lipoyl domains of lipoate-dependent enzymes, thereby converting the octanoylated domains into lipoylated derivatives. The sequence is that of Lipoyl synthase from Christiangramia forsetii (strain DSM 17595 / CGMCC 1.15422 / KT0803) (Gramella forsetii).